The chain runs to 254 residues: Small ribosomal subunit protein uS2 (254 aa).

It belongs to the universal ribosomal protein uS2 family.

The polypeptide is Small ribosomal subunit protein uS2 (Legionella pneumophila subsp. pneumophila (strain Philadelphia 1 / ATCC 33152 / DSM 7513)).